Here is a 285-residue protein sequence, read N- to C-terminus: MRTSNHLIGLVNFLTFLLSIPILGGGIWLSSRANSTDCLRFLQWPLIVIGISIMVVSLAGFAGACYRNKFLMWLYLVVMLLIIAALIGFIIFAYAVTDKGSGRTVLNRGYLDYYLEDYSGWLKDRVSDDSYWGKISSCLRDSGACRKIGRNFNGVPETADMFFLRRLSPVESGCCKPPTDCGFSYVNETGWDTRGGMIGPNQDCMVWSNDQSMLCYQCSSCKAGVLGSLKKSWRKVSVINIVVLIILVIFYVIAYAAYRNVKRIDNDEPAGEARMTKSHPSHFHL.

The Cytoplasmic segment spans residues 1–6 (MRTSNH). A helical transmembrane segment spans residues 7 to 27 (LIGLVNFLTFLLSIPILGGGI). Residues 28 to 43 (WLSSRANSTDCLRFLQ) are Extracellular-facing. An N-linked (GlcNAc...) asparagine glycan is attached at Asn-34. A helical transmembrane segment spans residues 44-64 (WPLIVIGISIMVVSLAGFAGA). At 65–71 (CYRNKFL) the chain is on the cytoplasmic side. The chain crosses the membrane as a helical span at residues 72–92 (MWLYLVVMLLIIAALIGFIIF). Over 93–235 (AYAVTDKGSG…LGSLKKSWRK (143 aa)) the chain is Extracellular. Asn-187 carries N-linked (GlcNAc...) asparagine glycosylation. Residues 236 to 256 (VSVINIVVLIILVIFYVIAYA) form a helical membrane-spanning segment. The Cytoplasmic portion of the chain corresponds to 257–285 (AYRNVKRIDNDEPAGEARMTKSHPSHFHL).

The protein belongs to the tetraspanin (TM4SF) family.

The protein resides in the cell membrane. May be involved in the regulation of cell differentiation. In Arabidopsis thaliana (Mouse-ear cress), this protein is Tetraspanin-3 (TET3).